We begin with the raw amino-acid sequence, 302 residues long: Proteasome subunit beta (302 aa).

Basic and acidic residues predominate over residues 1–10; sequence MAGRVREVSH. The segment at 1–21 is disordered; the sequence is MAGRVREVSHSSDQSGRLPAA. The propeptide at 1-67 is removed in mature form; by autocatalysis; sequence MAGRVREVSH…GPGAGEPPHA (67 aa). The active-site Nucleophile is Thr68. Residues 283–302 are disordered; sequence RRGNPGGNPGISAVHGDGGN.

The protein belongs to the peptidase T1B family. The 20S proteasome core is composed of 14 alpha and 14 beta subunits that assemble into four stacked heptameric rings, resulting in a barrel-shaped structure. The two inner rings, each composed of seven catalytic beta subunits, are sandwiched by two outer rings, each composed of seven alpha subunits. The catalytic chamber with the active sites is on the inside of the barrel. Has a gated structure, the ends of the cylinder being occluded by the N-termini of the alpha-subunits. Is capped by the proteasome-associated ATPase, ARC.

It localises to the cytoplasm. It carries out the reaction Cleavage of peptide bonds with very broad specificity.. The protein operates within protein degradation; proteasomal Pup-dependent pathway. The formation of the proteasomal ATPase ARC-20S proteasome complex, likely via the docking of the C-termini of ARC into the intersubunit pockets in the alpha-rings, may trigger opening of the gate for substrate entry. Interconversion between the open-gate and close-gate conformations leads to a dynamic regulation of the 20S proteasome proteolysis activity. Functionally, component of the proteasome core, a large protease complex with broad specificity involved in protein degradation. The chain is Proteasome subunit beta from Kineococcus radiotolerans (strain ATCC BAA-149 / DSM 14245 / SRS30216).